The chain runs to 72 residues: MMKLTCVLIIAVLFLTACQLTTAETRDEYRAVRSSDEVRNSRSCSGSGYGCKNTPCCAGLTCRGPRQGPICL.

The N-terminal stretch at 1 to 23 (MMKLTCVLIIAVLFLTACQLTTA) is a signal peptide. Residues 24-42 (ETRDEYRAVRSSDEVRNSR) constitute a propeptide that is removed on maturation. Cystine bridges form between cysteine 44–cysteine 57, cysteine 51–cysteine 62, and cysteine 56–cysteine 71.

The protein belongs to the conotoxin O1 superfamily. As to expression, expressed by the venom duct.

The protein resides in the secreted. This chain is Conotoxin VnMKLT2-011, found in Conus ventricosus (Mediterranean cone).